A 405-amino-acid polypeptide reads, in one-letter code: Argininosuccinate synthase (405 aa).

Residues 10-18 (AFSGGLDTS) and alanine 37 contribute to the ATP site. Positions 90 and 95 each coordinate L-citrulline. Glycine 120 provides a ligand contact to ATP. L-aspartate is bound by residues threonine 122, asparagine 126, and aspartate 127. Asparagine 126 contacts L-citrulline. L-citrulline contacts are provided by arginine 130, serine 181, serine 190, glutamate 266, and tyrosine 278.

It belongs to the argininosuccinate synthase family. Type 1 subfamily. As to quaternary structure, homotetramer.

It localises to the cytoplasm. It catalyses the reaction L-citrulline + L-aspartate + ATP = 2-(N(omega)-L-arginino)succinate + AMP + diphosphate + H(+). It participates in amino-acid biosynthesis; L-arginine biosynthesis; L-arginine from L-ornithine and carbamoyl phosphate: step 2/3. The chain is Argininosuccinate synthase from Rhizorhabdus wittichii (strain DSM 6014 / CCUG 31198 / JCM 15750 / NBRC 105917 / EY 4224 / RW1) (Sphingomonas wittichii).